A 531-amino-acid polypeptide reads, in one-letter code: Developmental and secondary metabolism regulator VE1 (531 aa).

In terms of domain architecture, Velvet spans 26–220 (NRSLWYQMTV…ADQGCPVRIR (195 aa)). Residues 40-45 (ERARAC) carry the Nuclear localization signal motif. 2 disordered regions span residues 206–435 (LSKT…SQTS) and 447–517 (PVSP…SRAD). A compositionally biased stretch (basic and acidic residues) spans 244-253 (FERREEDFGR). Pro residues predominate over residues 295–306 (YPPPPPPPPSYE). A compositionally biased stretch (polar residues) spans 348 to 357 (YAPTSQSPYS). The segment covering 381-390 (LKHELYDRRQ) has biased composition (basic and acidic residues). Residues 391–405 (STSTYVPPSPSVYST) are compositionally biased toward low complexity. Pro residues predominate over residues 416–427 (SYPPTPVAAPRP). The tract at residues 430-461 (MHSQTSLPALKIDQLVSPVSPLPPIEPQTGPA) is PEST. A compositionally biased stretch (polar residues) spans 479-491 (FAQSTRPLHNGQR).

It belongs to the velvet family. VeA subfamily. As to quaternary structure, component of the heterotrimeric velvet complex composed of LAE1, VE1 and VELB; VE1 acting as a bridging protein between LAE1 and VELB. Interacts with VELB and VELC.

It is found in the nucleus. The protein localises to the cytoplasm. Functionally, component of the velvet transcription factor complex that controls sexual/asexual developmental ratio in response to light, promoting sexual development in the darkness while stimulating asexual sporulation under illumination. The velvet complex hat acts as a global regulator for secondary metabolite gene expression. Controls the expression of the cycotoxins fumonisins and fusarins gene cluster. Involved in cell wall integrity, cell surface hydrophobicity, hyphal polarity and conidiation pattern. Required for pathogenicity against maize seedlings. Involved in oxidative stress resistance by positively regulating the transcription of the catalase-encoding gene CAT2. The polypeptide is Developmental and secondary metabolism regulator VE1 (Gibberella moniliformis (strain M3125 / FGSC 7600) (Maize ear and stalk rot fungus)).